A 342-amino-acid polypeptide reads, in one-letter code: RNA 3'-terminal phosphate cyclase (342 aa).

Residues glutamine 103 and 283-287 (YLADQ) each bind ATP. Histidine 308 functions as the Tele-AMP-histidine intermediate in the catalytic mechanism.

This sequence belongs to the RNA 3'-terminal cyclase family. Type 1 subfamily.

Its subcellular location is the cytoplasm. The enzyme catalyses a 3'-end 3'-phospho-ribonucleotide-RNA + ATP = a 3'-end 2',3'-cyclophospho-ribonucleotide-RNA + AMP + diphosphate. Catalyzes the conversion of 3'-phosphate to a 2',3'-cyclic phosphodiester at the end of RNA. The mechanism of action of the enzyme occurs in 3 steps: (A) adenylation of the enzyme by ATP; (B) transfer of adenylate to an RNA-N3'P to produce RNA-N3'PP5'A; (C) and attack of the adjacent 2'-hydroxyl on the 3'-phosphorus in the diester linkage to produce the cyclic end product. The biological role of this enzyme is unknown but it is likely to function in some aspects of cellular RNA processing. The polypeptide is RNA 3'-terminal phosphate cyclase (Shigella dysenteriae serotype 1 (strain Sd197)).